A 444-amino-acid polypeptide reads, in one-letter code: Argininosuccinate synthase (444 aa).

Residues 18 to 26 (AFSGGLDTS) and Ala44 contribute to the ATP site. An L-citrulline-binding site is contributed by Tyr100. 2 residues coordinate ATP: Gly130 and Thr132. L-aspartate contacts are provided by Thr132, Asn136, and Asp137. Asn136 contacts L-citrulline. Asp137 contributes to the ATP binding site. Arg140 and Ser193 together coordinate L-citrulline. Residue Asp195 participates in ATP binding. Residues Thr202, Glu204, and Glu281 each contribute to the L-citrulline site.

Belongs to the argininosuccinate synthase family. Type 2 subfamily. Homotetramer.

Its subcellular location is the cytoplasm. The enzyme catalyses L-citrulline + L-aspartate + ATP = 2-(N(omega)-L-arginino)succinate + AMP + diphosphate + H(+). The protein operates within amino-acid biosynthesis; L-arginine biosynthesis; L-arginine from L-ornithine and carbamoyl phosphate: step 2/3. The sequence is that of Argininosuccinate synthase from Haemophilus influenzae (strain PittGG).